A 308-amino-acid chain; its full sequence is Apolipoprotein E (308 aa).

The first 18 residues, 1–18 (MKFLWAALVVTLLAGCRA), serve as a signal peptide directing secretion. 8 tandem repeats follow at residues 75–96 (LLIEETMKEVKAYKEELEKQVG), 97–118 (PIAQETQARLSKELQAAQARLE), 119–140 (SDMEDVRTRLAQYRSEAQAALG), 141–162 (QNTDDLQGRLASHLRKLRKRLL), 163–184 (RDAEDLQKRLAVYQAGTREAAE), 185–206 (RGVSAVHERLGPLMMEGPLQAI), 207–224 (PPSQQLRERAEAWGQKVR), and 225–246 (GRLESVGSQARDRLDDMRDQME). The tract at residues 75–246 (LLIEETMKEV…RLDDMRDQME (172 aa)) is 8 X 22 AA approximate tandem repeats. Residues 153–163 (HLRKLRKRLLR) are LDL and other lipoprotein receptors binding. 157–160 (LRKR) serves as a coordination point for heparin. The segment at 205-281 (AIPPSQQLRE…SWFEPLVQDM (77 aa)) is lipid-binding and lipoprotein association. 220 to 227 (GQKVRGRL) contacts heparin. The segment at 257-308 (SQVRLQAEAFQTRLKSWFEPLVQDMQRQWASLVEKVQSTLGISPSTKPSKTK) is homooligomerization. The segment at 269–281 (RLKSWFEPLVQDM) is specificity for association with VLDL.

It belongs to the apolipoprotein A1/A4/E family. Homotetramer. May interact with ABCA1; functionally associated with ABCA1 in the biogenesis of HDLs. May interact with APP/A4 amyloid-beta peptide; the interaction is extremely stable in vitro but its physiological significance is unclear. May interact with MAPT. May interact with MAP2. In the cerebrospinal fluid, interacts with secreted SORL1. Interacts with PMEL; this allows the loading of PMEL luminal fragment on ILVs to induce fibril nucleation. In terms of processing, APOE exists as multiple glycosylated and sialylated glycoforms within cells and in plasma. The extent of glycosylation and sialylation are tissue and context specific. Post-translationally, glycated in plasma VLDL. Phosphorylated by FAM20C in the extracellular medium.

The protein resides in the secreted. Its subcellular location is the extracellular space. The protein localises to the extracellular matrix. It localises to the extracellular vesicle. It is found in the endosome. The protein resides in the multivesicular body. Functionally, APOE is an apolipoprotein, a protein associating with lipid particles, that mainly functions in lipoprotein-mediated lipid transport between organs via the plasma and interstitial fluids. APOE is a core component of plasma lipoproteins and is involved in their production, conversion and clearance. Apolipoproteins are amphipathic molecules that interact both with lipids of the lipoprotein particle core and the aqueous environment of the plasma. As such, APOE associates with chylomicrons, chylomicron remnants, very low density lipoproteins (VLDL) and intermediate density lipoproteins (IDL) but shows a preferential binding to high-density lipoproteins (HDL). It also binds a wide range of cellular receptors including the LDL receptor/LDLR and the very low-density lipoprotein receptor/VLDLR that mediate the cellular uptake of the APOE-containing lipoprotein particles. Finally, APOE also has a heparin-binding activity and binds heparan-sulfate proteoglycans on the surface of cells, a property that supports the capture and the receptor-mediated uptake of APOE-containing lipoproteins by cells. The protein is Apolipoprotein E (APOE) of Pteropus vampyrus (Large flying fox).